Reading from the N-terminus, the 98-residue chain is Parvalbumin beta 1 (98 aa).

N-acetylserine is present on Ser1. 2 EF-hand domains span residues 32–67 (KIGL…FSAG) and 67–98 (GARA…MIKG). Ca(2+) is bound by residues Asp45, Asp47, Ser49, Phe51, Glu53, Glu56, Asp80, Asp82, Asp84, Lys86, and Glu91.

This sequence belongs to the parvalbumin family.

In terms of biological role, in muscle, parvalbumin is thought to be involved in relaxation after contraction. It binds two calcium ions. The protein is Parvalbumin beta 1 of Macruronus magellanicus (Patagonian grenadier).